A 251-amino-acid chain; its full sequence is Triosephosphate isomerase (251 aa).

9–11 (NWK) provides a ligand contact to substrate. The active-site Electrophile is the histidine 95. Glutamate 167 acts as the Proton acceptor in catalysis. Substrate contacts are provided by residues glycine 173, serine 213, and 234–235 (GG).

This sequence belongs to the triosephosphate isomerase family. In terms of assembly, homodimer.

The protein localises to the cytoplasm. It catalyses the reaction D-glyceraldehyde 3-phosphate = dihydroxyacetone phosphate. Its pathway is carbohydrate biosynthesis; gluconeogenesis. The protein operates within carbohydrate degradation; glycolysis; D-glyceraldehyde 3-phosphate from glycerone phosphate: step 1/1. Involved in the gluconeogenesis. Catalyzes stereospecifically the conversion of dihydroxyacetone phosphate (DHAP) to D-glyceraldehyde-3-phosphate (G3P). The sequence is that of Triosephosphate isomerase from Geobacter metallireducens (strain ATCC 53774 / DSM 7210 / GS-15).